Here is a 607-residue protein sequence, read N- to C-terminus: Granule-bound starch synthase 1, chloroplastic/amyloplastic (607 aa).

The transit peptide at Met1–Cys77 directs the protein to the chloroplast. Lys95 is an ADP-alpha-D-glucose binding site. Residues Ser585 to Pro607 form a disordered region.

This sequence belongs to the glycosyltransferase 1 family. Bacterial/plant glycogen synthase subfamily.

The protein resides in the plastid. It localises to the chloroplast. Its subcellular location is the amyloplast. The enzyme catalyses an NDP-alpha-D-glucose + [(1-&gt;4)-alpha-D-glucosyl](n) = [(1-&gt;4)-alpha-D-glucosyl](n+1) + a ribonucleoside 5'-diphosphate + H(+). It functions in the pathway glycan biosynthesis; starch biosynthesis. This chain is Granule-bound starch synthase 1, chloroplastic/amyloplastic (WAXY), found in Solanum tuberosum (Potato).